A 1338-amino-acid polypeptide reads, in one-letter code: Insulin receptor substrate 2 (1338 aa).

Residues 1–12 show a composition bias toward pro residues; the sequence is MASPPRHGPPGP. Disordered stretches follow at residues 1–31 and 49–72; these read MASP…NHSV and VLRG…QPPR. In terms of domain architecture, PH spans 16-144; sequence DGPNLNNNNN…WYRALTDLVS (129 aa). Residues 19–28 are compositionally biased toward low complexity; the sequence is NLNNNNNNNN. Gly residues predominate over residues 53–66; that stretch reads PGAGGDEATAGGGS. The IRS-type PTB domain occupies 194 to 298; that stretch reads YREVWQVNLK…EAMKALKELF (105 aa). A disordered region spans residues 303–411; that stretch reads RSKSQSSGSS…SHTLSGGCGG (109 aa). Phosphoserine is present on residues serine 306 and serine 346. Threonine 350 is modified (phosphothreonine). 4 positions are modified to phosphoserine: serine 365, serine 384, serine 388, and serine 391. Arginine 412 is modified (omega-N-methylarginine). The interval 428-537 is disordered; the sequence is SRSMSMPVAH…PPARDGGGGG (110 aa). The segment covering 444 to 453 has biased composition (low complexity); sequence SPGSLSSSSG. Residues 459-471 are compositionally biased toward pro residues; that stretch reads YPPPPGPHPPLPH. The segment covering 475 to 493 has biased composition (low complexity); the sequence is HGPGQRPSSGSASASGSPS. Threonine 520 carries the phosphothreonine modification. A Phosphoserine modification is found at serine 523. Phosphothreonine is present on threonine 527. Residue tyrosine 540 is modified to Phosphotyrosine; by INSR. Residues 540–543 carry the YXXM motif 1 motif; it reads YGYM. Serine 560 carries the phosphoserine; by PLK1 modification. The residue at position 577 (serine 577) is a Phosphoserine. Threonine 579 and threonine 580 each carry phosphothreonine. Residue serine 594 is modified to Phosphoserine. Residues 598-601 carry the YXXM motif 2 motif; that stretch reads YTLM. 2 positions are modified to phosphoserine: serine 608 and serine 620. A phosphotyrosine; by INSR mark is found at tyrosine 653 and tyrosine 675. 2 consecutive short sequence motifs (YXXM motif) follow at residues 653–656 and 675–678; these read YMPM. Phosphoserine occurs at positions 679 and 682. Residues 703 to 719 are compositionally biased toward low complexity; that stretch reads PSAGPAGPAPTSAAGRT. Residues 703–739 form a disordered region; it reads PSAGPAGPAPTSAAGRTFPASGGGYKASSPAESSPED. 2 positions are modified to phosphoserine: serine 735 and serine 736. A YXXM motif 5 motif is present at residues 742–745; the sequence is YMRM. Phosphoserine is present on serine 770. Threonine 779 is subject to Phosphothreonine. Serine 805 bears the Phosphoserine mark. The short motif at 823-826 is the YXXM motif 6 element; the sequence is YVLM. Serine 828 is subject to Phosphoserine. Positions 840 to 1101 are disordered; sequence EPQATPGPSQ…KPEAARVASP (262 aa). Over residues 859 to 870 the composition is skewed to pro residues; the sequence is TQPPHPVVPSPV. Serine 915 bears the Phosphoserine mark. At tyrosine 919 the chain carries Phosphotyrosine; by INSR. Residues 938 to 967 show a composition bias toward low complexity; that stretch reads LLASAASSSSLLSASSPASSLGSGTPGTSS. Residue serine 973 is modified to Phosphoserine. Tyrosine 978 is subject to Phosphotyrosine; by INSR. A compositionally biased stretch (pro residues) spans 1013 to 1022; sequence PYPPLPPRPS. The YXXM motif 7 motif lies at 1072–1075; that stretch reads YTEM. At threonine 1082 the chain carries Phosphothreonine. Pro residues predominate over residues 1083-1093; it reads PPQPIAAPPKP. A Phosphoserine modification is found at serine 1100. A Phosphoserine; by PLK1 modification is found at serine 1109. Positions 1121–1296 are disordered; sequence LQASQPPDPH…TRSLGGLISA (176 aa). Residues 1150–1165 are compositionally biased toward low complexity; sequence ETFSSTTTVTPVSPSF. Residue threonine 1159 is modified to Phosphothreonine. A phosphoserine mark is found at serine 1162, serine 1174, serine 1176, and serine 1186. Polar residues predominate over residues 1174–1183; that stretch reads SASVENVSLR. A compositionally biased stretch (gly residues) spans 1188–1198; it reads GGVGVGPGGGD. Serine 1203 is modified (phosphoserine). Over residues 1224–1236 the composition is skewed to gly residues; it reads QPGGLVGCPGSGG. Tyrosine 1253 carries the phosphotyrosine; by INSR modification. The segment covering 1263-1277 has biased composition (pro residues); it reads GLPPQPQPPPPPLPQ. Lysine 1331 is covalently cross-linked (Glycyl lysine isopeptide (Lys-Gly) (interchain with G-Cter in ubiquitin)).

In terms of assembly, interacts with PHIP. Interacts with SH2B1; this interaction enhances leptin-induced activation of the PI3-kinase pathway. Interacts with GRB2. Interacts with PIK3R1. Interacts with DVL2; this interaction promotes the Wnt/beta-catenin signaling pathway. In terms of processing, phosphorylation fluctuates in a cell-cycle dependent manner with hyperphosphorylation during mitosis. Phosphorylated at Ser-560 and Ser-1109 by PLK1; these phosphorylations prevent the activation of the PI3K pathway upon growth factor stimulation by inhibiting the binding between IRS2 and the PI3K pathway components and increasing the level of IRS2 protein degradation. In addition, they prevent premature mitotic exit. Post-translationally, monoubiquitinated by NEDD4; leading to enhanced IGF1 signaling. During cell cycle, ubiquitination and proteasomal degradation are controlled by FZR1.

The protein resides in the cytoplasm. Its subcellular location is the cytosol. Its function is as follows. Signaling adapter protein that participates in the signal transduction from two prominent receptor tyrosine kinases, insulin receptor/INSR and insulin-like growth factor I receptor/IGF1R. Plays therefore an important role in development, growth, glucose homeostasis as well as lipid metabolism. Upon phosphorylation by the insulin receptor, functions as a signaling scaffold that propagates insulin action through binding to SH2 domain-containing proteins including the p85 regulatory subunit of PI3K, NCK1, NCK2, GRB2 or SHP2. Recruitment of GRB2 leads to the activation of the guanine nucleotide exchange factor SOS1 which in turn triggers the Ras/Raf/MEK/MAPK signaling cascade. Activation of the PI3K/AKT pathway is responsible for most of insulin metabolic effects in the cell, and the Ras/Raf/MEK/MAPK is involved in the regulation of gene expression and in cooperation with the PI3K pathway regulates cell growth and differentiation. Acts a positive regulator of the Wnt/beta-catenin signaling pathway through suppression of DVL2 autophagy-mediated degradation leading to cell proliferation. Plays a role in cell cycle progression by promoting a robust spindle assembly checkpoint (SAC) during M-phase. In macrophages, IL4-induced tyrosine phosphorylation of IRS2 leads to the recruitment and activation of phosphoinositide 3-kinase (PI3K). This chain is Insulin receptor substrate 2 (IRS2), found in Homo sapiens (Human).